Consider the following 310-residue polypeptide: Proline iminopeptidase (310 aa).

The 248-residue stretch at 41-288 folds into the AB hydrolase-1 domain; sequence LVTLHGGPGG…NSSHMAMWEE (248 aa). S116 (nucleophile) is an active-site residue. Residue D255 is part of the active site. The active-site Proton donor is H282.

The protein belongs to the peptidase S33 family. As to quaternary structure, part of the tricorn proteolytic complex.

It catalyses the reaction Release of N-terminal proline from a peptide.. Its function is as follows. Cleaves H-Pro-AMC as well as a wide spectrum of amino acid substrates and several peptide substrates without a proline at the N-terminus. In conjunction with the three factors F1, F2 and F3, Tricorn degrades oligopeptides in a sequential manner, yielding free amino acids. In Saccharolobus solfataricus (strain ATCC 35092 / DSM 1617 / JCM 11322 / P2) (Sulfolobus solfataricus), this protein is Proline iminopeptidase (pip).